Here is a 314-residue protein sequence, read N- to C-terminus: Dihydroorotate dehydrogenase (fumarate) (314 aa).

Residues Lys46, 70-74 (NSMGL), and Asn130 each bind substrate. 46–47 (KS) provides a ligand contact to FMN. An FMN-binding site is contributed by Asn130. Active-site nucleophile residues include Ser132 and Cys133. FMN is bound by residues Lys167 and Ile195. 196-197 (NS) provides a ligand contact to substrate. FMN is bound by residues Gly224, 252–253 (GG), and 274–275 (GT).

The protein belongs to the dihydroorotate dehydrogenase family. Type 1 subfamily. As to quaternary structure, homodimer. The cofactor is FMN.

It is found in the cytoplasm. It carries out the reaction (S)-dihydroorotate + fumarate = orotate + succinate. Its pathway is pyrimidine metabolism; UMP biosynthesis via de novo pathway. The activity is independent of the presence of oxygen. Its function is as follows. Catalyzes the conversion of dihydroorotate to orotate with fumarate as the electron acceptor. This chain is Dihydroorotate dehydrogenase (fumarate) (URA1), found in Lachancea kluyveri (strain ATCC 58438 / CBS 3082 / BCRC 21498 / NBRC 1685 / JCM 7257 / NCYC 543 / NRRL Y-12651) (Yeast).